The chain runs to 169 residues: Ureidoglycolate lyase (169 aa).

Belongs to the ureidoglycolate lyase family. In terms of assembly, homodimer. Requires Ni(2+) as cofactor.

The enzyme catalyses (S)-ureidoglycolate = urea + glyoxylate. Its pathway is nitrogen metabolism; (S)-allantoin degradation. Its function is as follows. Catalyzes the catabolism of the allantoin degradation intermediate (S)-ureidoglycolate, generating urea and glyoxylate. Involved in the utilization of allantoin as nitrogen source. The sequence is that of Ureidoglycolate lyase from Brucella abortus biovar 1 (strain 9-941).